A 301-amino-acid polypeptide reads, in one-letter code: Cutinase (301 aa).

The N-terminal stretch at 1–40 (MAVMTPRRERSSLLSRALQVTAAAATALVTAVSLAAPAHA) is a signal peptide. Tyrosine 100 is a poly(ethylene terephthalate) binding site. Serine 170 functions as the Nucleophile in the catalytic mechanism. The poly(ethylene terephthalate) site is built by methionine 171 and tryptophan 195. Active-site charge relay system residues include aspartate 216 and histidine 248. Cysteine 281 and cysteine 299 are joined by a disulfide.

The protein belongs to the AB hydrolase superfamily.

It localises to the secreted. The protein resides in the periplasm. It catalyses the reaction a butanoate ester + H2O = an aliphatic alcohol + butanoate + H(+). The enzyme catalyses (ethylene terephthalate)(n) + H2O = (ethylene terephthalate)(n-1) + 4-[(2-hydroxyethoxy)carbonyl]benzoate + H(+). The catalysed reaction is cutin + H2O = cutin monomers.. Activated by magnesium ions. Activated by calcium ions. Inhibited by the serine hydrolase inhibitor phenylmethanesulfonyl fluoride (PMSF). Its function is as follows. Catalyzes the hydrolysis of cutin, a polyester that forms the structure of plant cuticle. Shows esterase activity towards p-nitrophenol-linked aliphatic esters (pNP-aliphatic esters). Also hydrolyzes the triglyceride triolein. Capable of degrading the plastic poly(ethylene terephthalate) (PET), the most abundant polyester plastic in the world. The chain is Cutinase from Thermobifida fusca (strain YX).